A 264-amino-acid polypeptide reads, in one-letter code: Accessory gland-specific peptide 26Aa (264 aa).

Positions Met1–Ala18 are cleaved as a signal peptide. Positions Met1–Asn138 are sufficient for promoting ovulation when expressed in females. N-linked (GlcNAc...) asparagine glycans are attached at residues Asn88, Asn122, Asn138, and Asn145. The tract at residues Leu189–Asn219 is disordered. Residues Lys194–Ser203 show a composition bias toward basic residues. The interval Asn219–Leu264 is necessary and sufficient for homodimerization.

Homodimer. In terms of assembly, may form a homodimer. Post-translationally, glycosylation. In terms of processing, undergoes several cleavages as it is secreted and is further processed in the recipient female. The precursor molecule is proteolytically cleaved by the seminal metalloprotease Semp1 at Lys-48 to produce CP1-N and CP1-C. Cleaved at Lys-67 by Semp1 to generate CP2-N and CP2-C. Cleavage appears to take place in the mated female genital tract. Post-translationally, cleaved at Lys-117 by Semp1 to generate CP3-N and CP3-C. Cleavage appears to take place in the mated female genital tract. In terms of tissue distribution, produced in the male accessory glands and secreted into seminal fluid (at protein level). Detected in the main cells and secondary cells of the accessory glands of 1 day old males (at protein level). In 5 day old males, confined to the secondary cells and only reappears in the main cells after mating (at protein level). Produced in adult males 3-4 hr after eclosion, levels increase reaching a peak at day 3-5 which is maintained until at least day 10 of adulthood (at protein level). In unmated male adults, levels are maintained for the first 6 days of adulthood and then gradually decrease for at least the next 8 days. In mated females, detected in the genital tract 3 minutes after the start of mating (ASM) and is secreted into the female hemolymph via the posterior vaginal wall 5 minutes ASM (at protein level).

Its subcellular location is the secreted. The protein localises to the cytoplasm. Its function is as follows. Male seminal protein which enhances ovulation in female Drosophila by stimulating the release of oocytes by the ovary following mating. Acts by increasing octopamine (OA) neuronal signaling in the female genital tract leading to the postmating relaxation of the oviduct muscles. This activation of the OA signaling pathway is likely to indirectly contribute to the mating-dependent increase in the number of OA synaptic sites in the female reproductive tract. Functionally, male seminal peptide which is able to enhance ovulation in female Drosophila. The polypeptide is Accessory gland-specific peptide 26Aa (Drosophila melanogaster (Fruit fly)).